The following is a 333-amino-acid chain: Biotin synthase (333 aa).

The 227-residue stretch at 47–273 (YYGNKVKLNM…MNPTKEIRIA (227 aa)) folds into the Radical SAM core domain. 3 residues coordinate [4Fe-4S] cluster: cysteine 65, cysteine 69, and cysteine 72. [2Fe-2S] cluster-binding residues include cysteine 109, cysteine 141, cysteine 201, and arginine 271.

It belongs to the radical SAM superfamily. Biotin synthase family. As to quaternary structure, homodimer. [4Fe-4S] cluster serves as cofactor. [2Fe-2S] cluster is required as a cofactor.

It catalyses the reaction (4R,5S)-dethiobiotin + (sulfur carrier)-SH + 2 reduced [2Fe-2S]-[ferredoxin] + 2 S-adenosyl-L-methionine = (sulfur carrier)-H + biotin + 2 5'-deoxyadenosine + 2 L-methionine + 2 oxidized [2Fe-2S]-[ferredoxin]. It functions in the pathway cofactor biosynthesis; biotin biosynthesis; biotin from 7,8-diaminononanoate: step 2/2. Its function is as follows. Catalyzes the conversion of dethiobiotin (DTB) to biotin by the insertion of a sulfur atom into dethiobiotin via a radical-based mechanism. This is Biotin synthase from Geobacillus kaustophilus (strain HTA426).